A 112-amino-acid polypeptide reads, in one-letter code: Iron-sulfur cluster assembly protein CyaY (112 aa).

The protein belongs to the frataxin family.

In terms of biological role, involved in iron-sulfur (Fe-S) cluster assembly. May act as a regulator of Fe-S biogenesis. This chain is Iron-sulfur cluster assembly protein CyaY, found in Herminiimonas arsenicoxydans.